Reading from the N-terminus, the 120-residue chain is Chaperonin GroEL (120 aa).

Residue aspartate 23–threonine 27 participates in ATP binding.

The protein belongs to the chaperonin (HSP60) family. In terms of assembly, forms a cylinder of 14 subunits composed of two heptameric rings stacked back-to-back. Interacts with the co-chaperonin GroES.

It localises to the cytoplasm. It catalyses the reaction ATP + H2O + a folded polypeptide = ADP + phosphate + an unfolded polypeptide.. Functionally, together with its co-chaperonin GroES, plays an essential role in assisting protein folding. The GroEL-GroES system forms a nano-cage that allows encapsulation of the non-native substrate proteins and provides a physical environment optimized to promote and accelerate protein folding. This chain is Chaperonin GroEL, found in Mycobacterium malmoense.